We begin with the raw amino-acid sequence, 412 residues long: Glutamate dehydrogenase (412 aa).

The active site involves K102.

This sequence belongs to the Glu/Leu/Phe/Val dehydrogenases family. In terms of tissue distribution, in roots, stems, leaves and flowers but not in fruits.

Its subcellular location is the mitochondrion matrix. It carries out the reaction L-glutamate + NAD(+) + H2O = 2-oxoglutarate + NH4(+) + NADH + H(+). It catalyses the reaction L-glutamate + NADP(+) + H2O = 2-oxoglutarate + NH4(+) + NADPH + H(+). The sequence is that of Glutamate dehydrogenase (GDH1) from Solanum lycopersicum (Tomato).